A 233-amino-acid polypeptide reads, in one-letter code: MKEDPYLEVKRHLAREAAALVTSGMLLGLGSGSTSREFIKAVAERKKQENLDIRAVASSKESYSLASSLGIPLIDDEEFINTDLAVDGADEIDPQLRMIKGGGGAIFREKILLQSSQRRLILADESKSVKVLGKFGLPVEISPFGRSSIIATLENFGYLGNLRKNPRGGFFITNNGNYIYDIHTPNVYPHPEEDLLKLLQIHGIIEAGFVIENVEVWLGYTNGQIGKKNTGGL.

Substrate contacts are provided by residues 31 to 34 (SGST), 87 to 90 (DGAD), and 100 to 103 (KGGG). Glutamate 109 (proton acceptor) is an active-site residue. A substrate-binding site is contributed by lysine 127.

It belongs to the ribose 5-phosphate isomerase family. In terms of assembly, homodimer.

The enzyme catalyses aldehydo-D-ribose 5-phosphate = D-ribulose 5-phosphate. It participates in carbohydrate degradation; pentose phosphate pathway; D-ribose 5-phosphate from D-ribulose 5-phosphate (non-oxidative stage): step 1/1. In terms of biological role, catalyzes the reversible conversion of ribose-5-phosphate to ribulose 5-phosphate. In Chlamydia caviae (strain ATCC VR-813 / DSM 19441 / 03DC25 / GPIC) (Chlamydophila caviae), this protein is Ribose-5-phosphate isomerase A.